The primary structure comprises 187 residues: Large ribosomal subunit protein uL22 (187 aa).

This sequence belongs to the universal ribosomal protein uL22 family.

This Theileria parva (East coast fever infection agent) protein is Large ribosomal subunit protein uL22 (RPL17).